The sequence spans 71 residues: Ceratotoxin-A (71 aa).

An N-terminal signal peptide occupies residues 1 to 23 (MANLKAVFLICIVAFIALQCVVA). 2 consecutive propeptides follow at residues 24–35 (EPAAEDSVVVKR) and 65–71 (VAAGLVG).

In terms of assembly, homomer of four to six subunits.

Its subcellular location is the secreted. Its function is as follows. Female-specific peptides with potent activity against Gram-positive and Gram-negative bacteria. They have as well hemolytic activity. This Ceratitis capitata (Mediterranean fruit fly) protein is Ceratotoxin-A (CTXA1).